We begin with the raw amino-acid sequence, 228 residues long: Biopolymer transport protein exbB1 (228 aa).

Transmembrane regions (helical) follow at residues L11–E31, L116–I136, and L158–G178.

It belongs to the ExbB/TolQ family. The accessory proteins ExbB and ExbD seem to form a complex with TonB.

The protein resides in the cell inner membrane. Its function is as follows. Involved in the TonB-dependent energy-dependent transport of various receptor-bound substrates. Protects ExbD from proteolytic degradation and functionally stabilizes TonB. In Vibrio cholerae serotype O1 (strain ATCC 39315 / El Tor Inaba N16961), this protein is Biopolymer transport protein exbB1 (exbB1).